A 182-amino-acid polypeptide reads, in one-letter code: Small ribosomal subunit protein uS5 (182 aa).

An S5 DRBM domain is found at 16–79 (FVDRLVHINR…ESAKRGMIYV (64 aa)).

Belongs to the universal ribosomal protein uS5 family. As to quaternary structure, part of the 30S ribosomal subunit. Contacts proteins S4 and S8.

In terms of biological role, with S4 and S12 plays an important role in translational accuracy. Located at the back of the 30S subunit body where it stabilizes the conformation of the head with respect to the body. In Bartonella tribocorum (strain CIP 105476 / IBS 506), this protein is Small ribosomal subunit protein uS5.